The primary structure comprises 736 residues: DNA topoisomerase 1 (736 aa).

The 112-residue stretch at 2 to 113 folds into the Toprim domain; sequence KHLIIVESPA…SYPRIVFHEI (112 aa). Mg(2+) contacts are provided by E8 and D82. One can recognise a Topo IA-type catalytic domain in the interval 129–552; it reads DMFKVNAQQA…DFYYPFMDKI (424 aa). An interaction with DNA region spans residues 163–168; that stretch reads SAGRVQ. Catalysis depends on Y297, which acts as the O-(5'-phospho-DNA)-tyrosine intermediate. 4 C4-type zinc fingers span residues 572–598, 616–642, 663–689, and 702–725; these read CPKCGGELVKKNSRYGEFIACNNYPKC, CEKCGGEMVQKFSRNGAFLACNNYPEC, CPECGGDIALKRSKKGSFYGCNNYPKC, and CEKCHYLMSERIYRKKKAHECIQC.

It belongs to the type IA topoisomerase family. In terms of assembly, monomer. It depends on Mg(2+) as a cofactor.

The catalysed reaction is ATP-independent breakage of single-stranded DNA, followed by passage and rejoining.. Releases the supercoiling and torsional tension of DNA, which is introduced during the DNA replication and transcription, by transiently cleaving and rejoining one strand of the DNA duplex. Introduces a single-strand break via transesterification at a target site in duplex DNA. The scissile phosphodiester is attacked by the catalytic tyrosine of the enzyme, resulting in the formation of a DNA-(5'-phosphotyrosyl)-enzyme intermediate and the expulsion of a 3'-OH DNA strand. The free DNA strand then undergoes passage around the unbroken strand, thus removing DNA supercoils. Finally, in the religation step, the DNA 3'-OH attacks the covalent intermediate to expel the active-site tyrosine and restore the DNA phosphodiester backbone. The chain is DNA topoisomerase 1 from Helicobacter pylori (strain J99 / ATCC 700824) (Campylobacter pylori J99).